The following is a 706-amino-acid chain: Elongation factor G (706 aa).

Residues 8 to 295 (ERYRNFGIMA…AVIDYLPSPL (288 aa)) enclose the tr-type G domain. Residues 17–24 (AHIDAGKT), 92–96 (DTPGH), and 146–149 (NKMD) each bind GTP.

It belongs to the TRAFAC class translation factor GTPase superfamily. Classic translation factor GTPase family. EF-G/EF-2 subfamily.

It localises to the cytoplasm. In terms of biological role, catalyzes the GTP-dependent ribosomal translocation step during translation elongation. During this step, the ribosome changes from the pre-translocational (PRE) to the post-translocational (POST) state as the newly formed A-site-bound peptidyl-tRNA and P-site-bound deacylated tRNA move to the P and E sites, respectively. Catalyzes the coordinated movement of the two tRNA molecules, the mRNA and conformational changes in the ribosome. The sequence is that of Elongation factor G from Jannaschia sp. (strain CCS1).